The sequence spans 67 residues: Large ribosomal subunit protein bL35 (67 aa).

This sequence belongs to the bacterial ribosomal protein bL35 family.

This Synechocystis sp. (strain ATCC 27184 / PCC 6803 / Kazusa) protein is Large ribosomal subunit protein bL35.